The following is a 103-amino-acid chain: MYAVIKTGGKQYKVVAGEKFKVEQIPADIGSEITLDQVLALGAGETIKFGAPLVEGATVLATVVSHGRHDKVKIFKMRRRKHYQKHQGHRQNYTELQIVSING.

It belongs to the bacterial ribosomal protein bL21 family. As to quaternary structure, part of the 50S ribosomal subunit. Contacts protein L20.

This protein binds to 23S rRNA in the presence of protein L20. In Herminiimonas arsenicoxydans, this protein is Large ribosomal subunit protein bL21.